Reading from the N-terminus, the 412-residue chain is NFATC2-interacting protein (412 aa).

The tract at residues methionine 1 to leucine 38 is disordered. Residues arginine 8 to arginine 30 show a composition bias toward basic residues. Phosphoserine is present on residues serine 49, serine 51, serine 79, serine 81, and serine 83. The segment at valine 58 to proline 115 is disordered. The span at alanine 86 to threonine 96 shows a compositional bias: low complexity. Position 118 is a phosphoserine (serine 118). Lysine 120 is covalently cross-linked (Glycyl lysine isopeptide (Lys-Gly) (interchain with G-Cter in SUMO2)). Residues lysine 136–threonine 206 are disordered. Residues arginine 168–serine 227 adopt a coiled-coil conformation. Residues cysteine 175–glutamate 184 are compositionally biased toward basic and acidic residues. A phosphoserine mark is found at serine 191, serine 197, and serine 307. A phosphothreonine mark is found at threonine 309 and threonine 311. Positions leucine 341–glycine 412 constitute a Ubiquitin-like domain. Serine 362 and serine 383 each carry phosphoserine.

As to quaternary structure, interacts with NFATC2, TRAF1, TRAF2 and PRMT1. Interacts with UBE2I/UBC9. In terms of processing, methylation at the N-terminus by PRMT1 modulates interaction with the NFAT complex and results in augmented cytokine production. As to expression, highest level detected in spleen, thymus and testis.

The protein localises to the nucleus. It localises to the cytoplasm. Its function is as follows. In T-helper 2 (Th2) cells, regulates the magnitude of NFAT-driven transcription of a specific subset of cytokine genes, including IL3, IL4, IL5 and IL13, but not IL2. Recruits PRMT1 to the IL4 promoter; this leads to enhancement of histone H4 'Arg-3'-methylation and facilitates subsequent histone acetylation at the IL4 locus, thus promotes robust cytokine expression. Down-regulates formation of poly-SUMO chains by UBE2I/UBC9. The polypeptide is NFATC2-interacting protein (Nfatc2ip) (Mus musculus (Mouse)).